The following is a 245-amino-acid chain: Neurovirulence factor ICP34.5 (245 aa).

The span at 1–15 shows a compositional bias: basic residues; that stretch reads MARRRRRHRGPRRPR. The tract at residues 1–17 is required for nucleolar localization; sequence MARRRRRHRGPRRPRPP. Disordered stretches follow at residues 1–122 and 143–172; these read MARR…PFRL and RRAG…PATP. The segment covering 25 to 36 has biased composition (polar residues); it reads TAQSQVTSTPNS. The segment covering 67 to 77 has biased composition (acidic residues); it reads ASDDDDDDDWP. 2 stretches are compositionally biased toward pro residues: residues 78–87 and 113–122; these read DSPPPEPAPE and SHPPSRPFRL. The Nuclear export signal motif lies at 122 to 131; that stretch reads LPPRLALRLR. 6 tandem repeats follow at residues 155–157, 158–160, 161–163, 164–166, 167–169, and 170–172. The tract at residues 155–172 is 6 X 3 AA tandem repeats of A-T-P; that stretch reads ATPATPATPATPATPATP. Residues 158 to 172 are compositionally biased toward low complexity; the sequence is ATPATPATPATPATP. Positions 172 to 185 are binding to PP1CA; it reads PARVRFSPHVRVRH. The interval 172–185 is interaction with host PPP1CA; it reads PARVRFSPHVRVRH. The tract at residues 187 to 245 is important for interferon resistance; that stretch reads VVWASAARLARRGSWARERADRARFRRRVAEAEAVIGPCLGPEARARALARGAGPANSV. The Bipartite nuclear localization signal signature appears at 197 to 215; the sequence is RRGSWARERADRARFRRRV. The segment at 215-230 is interaction with host EIF2S1/EIF-2ALPHA; that stretch reads VAEAEAVIGPCLGPEA.

This sequence belongs to the PPP1R15 family. Interacts with host PPP1CA to form a high-molecular-weight complex that dephosphorylates EIF2S1/eIF-2alpha. Interacts with host EIF2S1/eIF-2alpha; this interaction is crucial for the specific dephosphorylation of EIF2S1/eIF-2alpha by PPP1CA. Binds to proliferating cell nuclear antigen (PCNA), which may release host cells from growth arrest and facilitate viral replication. Interacts (via N-terminus) with host C1QBP and PRKCA. Interacts with protein UL31. Interacts with host TBK1. Interacts with host STING/TMEM173; this interaction inhibits the intracellular DNA sensing pathway. Interacts with host BECN1; this interaction modulates host autophagy.

The protein localises to the host cytoplasm. It localises to the host nucleus. It is found in the host nucleolus. Its subcellular location is the virion. Inhibits the establishment of the immune response and of the integrated stress response (ISR) in the infected cell. Plays essential roles in viral nuclear egress to mediate capsid transit across the nuclear membrane. Facilitates nuclear egress cooperatively with host C1QBP and protein kinase C/PKC to induce lamin A/C phosphorylation and subsequent reorganization. In turn, lamina disassembles and nuclear egress occurs. Recruits the serine/threonine protein phosphatase PPP1CA/PP1-alpha to dephosphorylate the translation initiation factor EIF2S1/eIF-2alpha, thereby couteracting the host shutoff of protein synthesis involving double-stranded RNA-dependent protein kinase EIF2AK2/PKR. In turn, controls host IRF3 activation and subsequently inhibits host interferon response. Controls the DNA sensing pathway by interacting with and inhibiting host STING/TMEM173. Also down-modulates the host MHC class II proteins cell surface expression. Acts as a neurovirulence factor that has a profound effect on the growth of the virus in central nervous system tissue, by interacting with host BECN1 and thereby antagonizing the host autophagy response. The protein is Neurovirulence factor ICP34.5 (RL1) of Homo sapiens (Human).